We begin with the raw amino-acid sequence, 68 residues long: Large ribosomal subunit protein uL29 (68 aa).

It belongs to the universal ribosomal protein uL29 family.

In Limosilactobacillus fermentum (strain NBRC 3956 / LMG 18251) (Lactobacillus fermentum), this protein is Large ribosomal subunit protein uL29.